Consider the following 1254-residue polypeptide: NPC intracellular cholesterol transporter 1 homolog 1b (1254 aa).

The signal sequence occupies residues 1–16 (MKVIFATIWLIAGAWS). The Extracellular portion of the chain corresponds to 17–272 (QSAEQLGCIW…WKIAGLYGVT (256 aa)). 8 disulfides stabilise this stretch: C24–C81, C62–C116, C82–C120, C104–C241, C107–C161, C178–C186, C231–C246, and C243–C250. N-linked (GlcNAc...) asparagine glycans are attached at residues N123 and N132. The helical transmembrane segment at 273 to 293 (FILALIIACALSFFIFWGAFG) threads the bilayer. The Cytoplasmic segment spans residues 294-325 (KTSAPSVCMPTLFGEFFYHGFRIWGTFCAKHP). The helical transmembrane segment at 326 to 346 (VIVLALCSWAIAGLSFGIRYM) threads the bilayer. Residues 347 to 593 (TITTDPVELW…AIVELSEGEV (247 aa)) are Extracellular-facing. Residue N389 is glycosylated (N-linked (GlcNAc...) asparagine). C438 and C454 form a disulfide bridge. Residue N479 is glycosylated (N-linked (GlcNAc...) asparagine). Cysteines 491 and 500 form a disulfide. In terms of domain architecture, SSD spans 592-757 (EVSTVVISYV…ITAFVALMAI (166 aa)). The helical transmembrane segment at 594-614 (STVVISYVVMFVYVAIALGHI) threads the bilayer. At 615-625 (RSCRGFLRESR) the chain is on the cytoplasmic side. The helical transmembrane segment at 626 to 646 (IMLAIGGIVIVLASVVCSLGF) threads the bilayer. Residues 647 to 657 (WGYLDVTTTML) are Extracellular-facing. A helical membrane pass occupies residues 658 to 678 (AIEVIPFLVLAVGVDNIFIMV). Residues 679-736 (HTYQRLDHSKFKTTHEAIGEAIGQVGPSILQTAGSEMACFAIGCISDMPAVKTFAMYA) are Cytoplasmic-facing. A helical membrane pass occupies residues 737–757 (AIAILLDFLLQITAFVALMAI). The Extracellular segment spans residues 758 to 815 (DEKRYLDGRLDMLCCVKSGGKKINDEDGDGVDRPKEVGLLETLFKNFYSPFLLSKPVK). Residues 816–836 (VSVLLIFTVITCLSLMVTPSI) form a helical membrane-spanning segment. The Cytoplasmic segment spans residues 837-857 (EKGLDQEMSMPKNSHVVKYFR). The chain crosses the membrane as a helical span at residues 858–878 (YMVDLLAMGAPVYWVLKPGLN). At 879–1079 (YSEPLQQNLI…EQYLTIWGDA (201 aa)) the chain is on the extracellular side. C889 and C894 are oxidised to a cystine. Residues N896 and N939 are each glycosylated (N-linked (GlcNAc...) asparagine). Disulfide bonds link C935–C990, C936–C958, and C946–C955. A helical transmembrane segment spans residues 1080 to 1100 (MFSLGMSLVAIFLVTLLITGL). At 1101-1105 (DITST) the chain is on the cytoplasmic side. The chain crosses the membrane as a helical span at residues 1106 to 1126 (FIVLFMVICILINMLGMMWAW). Residues 1127–1132 (SINLNA) are Extracellular-facing. The helical transmembrane segment at 1133 to 1153 (ISLVNLVVCVGIGVEFVAHIV) threads the bilayer. Over 1154 to 1174 (RSFKRAEGTAQERARHSLNVT) the chain is Cytoplasmic. A helical transmembrane segment spans residues 1175-1195 (GSSVLSGITLTKFAGIVVLGF). The Extracellular portion of the chain corresponds to 1196–1207 (SNSQIFQVFYFR). The helical transmembrane segment at 1208–1228 (MYLGIVLIGAAHGLILLPVLL) threads the bilayer. At 1229–1254 (SLLGPPQKLARSSGAEPTASITITTN) the chain is on the cytoplasmic side.

It belongs to the patched family. In terms of tissue distribution, expressed in the midgut.

It localises to the cell membrane. The enzyme catalyses cholesterol(in) = cholesterol(out). In terms of biological role, important for cholesterol absorption at the midgut epithelium. Acts only in the early steps of sterol absorption, prior to Npc1a-dependent intracellular sterol trafficking. This is NPC intracellular cholesterol transporter 1 homolog 1b from Drosophila melanogaster (Fruit fly).